Reading from the N-terminus, the 407-residue chain is Putative ammonium transporter MTH_661 (407 aa).

12 helical membrane passes run 9-29 (AWML…VAMF), 47-67 (FVSL…LIFG), 70-90 (VSGI…GSAS), 101-121 (FAIF…GAVV), 129-149 (WILF…HWVW), 162-182 (FAGG…LALV), 196-216 (LGYS…FNAG), 226-246 (ANAM…WILM), 257-277 (LGAL…AGFV), 279-299 (IGAS…AVSW), 312-332 (VFGI…LFAV), and 357-377 (IGVV…AMLL).

Belongs to the ammonia transporter channel (TC 1.A.11.2) family.

The protein localises to the cell membrane. This chain is Putative ammonium transporter MTH_661, found in Methanothermobacter thermautotrophicus (strain ATCC 29096 / DSM 1053 / JCM 10044 / NBRC 100330 / Delta H) (Methanobacterium thermoautotrophicum).